A 284-amino-acid polypeptide reads, in one-letter code: MQPTPTQRPEAIVHDEKAQLDFARDMSYGDYLHLDELLGAQRPLSPEHNEMLFIVQHQTSELWMKLMLHELRAAIAAIQQDRLQPAFKMLARVSKILEQLVSAWDVLATMTPPEYSALRPYLAHSSGFQSYQYRQIEYLLGNKNAAMLQPHAHRADLLAQVRAAFEAPSLYDEALRFLARSGLAVPAGALQRDWTQPYRADDQVEQAWLTVYRQSERYWNQYQLGEKLTDLEDAFRLWRFRHVTTVERIIGFKRGTGGTSGVTYLRKMLEVVLFPEIWKLRTDL.

Residues 53-57 (FIVQH), Tyr-115, and Arg-119 contribute to the substrate site. His-242 is a binding site for heme. Thr-256 serves as a coordination point for substrate.

It belongs to the tryptophan 2,3-dioxygenase family. Homotetramer. Heme serves as cofactor.

It carries out the reaction L-tryptophan + O2 = N-formyl-L-kynurenine. The protein operates within amino-acid degradation; L-tryptophan degradation via kynurenine pathway; L-kynurenine from L-tryptophan: step 1/2. In terms of biological role, heme-dependent dioxygenase that catalyzes the oxidative cleavage of the L-tryptophan (L-Trp) pyrrole ring and converts L-tryptophan to N-formyl-L-kynurenine. Catalyzes the oxidative cleavage of the indole moiety. The sequence is that of Tryptophan 2,3-dioxygenase from Bordetella parapertussis (strain 12822 / ATCC BAA-587 / NCTC 13253).